The following is a 561-amino-acid chain: Asparagine synthetase [glutamine-hydrolyzing] (561 aa).

Cys-2 (for GATase activity) is an active-site residue. Residues 2–191 (CGIWALFGSD…PGHYEVLDLK (190 aa)) enclose the Glutamine amidotransferase type-2 domain. L-glutamine-binding positions include 49–53 (RLAVV), 75–77 (NGE), and Asp-97. An Asparagine synthetase domain is found at 213 to 536 (HALYDSVEKL…PGRADWLTHY (324 aa)). Residues Leu-256, Ile-288, and 363 to 364 (SG) contribute to the ATP site. Residue Lys-385 is modified to N6-acetyllysine. Thr-545 carries the phosphothreonine modification. At Ser-557 the chain carries Phosphoserine.

The enzyme catalyses L-aspartate + L-glutamine + ATP + H2O = L-asparagine + L-glutamate + AMP + diphosphate + H(+). Its pathway is amino-acid biosynthesis; L-asparagine biosynthesis; L-asparagine from L-aspartate (L-Gln route): step 1/1. This chain is Asparagine synthetase [glutamine-hydrolyzing] (ASNS), found in Cricetulus griseus (Chinese hamster).